A 413-amino-acid polypeptide reads, in one-letter code: Multifunctional CCA protein (413 aa).

The ATP site is built by Gly8 and Arg11. CTP-binding residues include Gly8 and Arg11. Mg(2+) contacts are provided by Asp21 and Asp23. The ATP site is built by Arg91, Arg137, and Arg140. CTP is bound by residues Arg91, Arg137, and Arg140. Positions 228 to 329 (TGLHTLMTVT…VKLFDSIDAW (102 aa)) constitute an HD domain.

It belongs to the tRNA nucleotidyltransferase/poly(A) polymerase family. Bacterial CCA-adding enzyme type 1 subfamily. Monomer. Can also form homodimers and oligomers. Mg(2+) is required as a cofactor. Requires Ni(2+) as cofactor.

The enzyme catalyses a tRNA precursor + 2 CTP + ATP = a tRNA with a 3' CCA end + 3 diphosphate. It carries out the reaction a tRNA with a 3' CCA end + 2 CTP + ATP = a tRNA with a 3' CCACCA end + 3 diphosphate. In terms of biological role, catalyzes the addition and repair of the essential 3'-terminal CCA sequence in tRNAs without using a nucleic acid template. Adds these three nucleotides in the order of C, C, and A to the tRNA nucleotide-73, using CTP and ATP as substrates and producing inorganic pyrophosphate. tRNA 3'-terminal CCA addition is required both for tRNA processing and repair. Also involved in tRNA surveillance by mediating tandem CCA addition to generate a CCACCA at the 3' terminus of unstable tRNAs. While stable tRNAs receive only 3'-terminal CCA, unstable tRNAs are marked with CCACCA and rapidly degraded. The polypeptide is Multifunctional CCA protein (Klebsiella pneumoniae (strain 342)).